Here is a 503-residue protein sequence, read N- to C-terminus: uncharacterized protein (503 aa).

A helical membrane pass occupies residues 26-46 (ILFLLLGLIILVNISINVATA). 4 disordered regions span residues 155 to 176 (RPLS…MSQM), 311 to 381 (YDAR…ESHE), 436 to 456 (QISD…NPGG), and 472 to 503 (VQEN…GKLN). 2 stretches are compositionally biased toward basic and acidic residues: residues 311–322 (YDARDQWRRGTE) and 334–346 (NPRE…DHNS). The span at 348–367 (AHRQNFSSHTHSQPNHSPPQ) shows a compositional bias: polar residues. Basic residues predominate over residues 493 to 503 (SLHRSRTGKLN).

The protein localises to the membrane. This is an uncharacterized protein from Mus musculus (Mouse).